The following is a 545-amino-acid chain: Glucose-6-phosphate isomerase (545 aa).

Catalysis depends on Glu-351, which acts as the Proton donor. Residues His-382 and Lys-510 contribute to the active site.

This sequence belongs to the GPI family.

Its subcellular location is the cytoplasm. It carries out the reaction alpha-D-glucose 6-phosphate = beta-D-fructose 6-phosphate. It participates in carbohydrate biosynthesis; gluconeogenesis. The protein operates within carbohydrate degradation; glycolysis; D-glyceraldehyde 3-phosphate and glycerone phosphate from D-glucose: step 2/4. Its function is as follows. Catalyzes the reversible isomerization of glucose-6-phosphate to fructose-6-phosphate. This is Glucose-6-phosphate isomerase from Shewanella baltica (strain OS155 / ATCC BAA-1091).